Reading from the N-terminus, the 461-residue chain is Glycogen synthase (461 aa).

Lys-15 lines the ADP-alpha-D-glucose pocket.

It belongs to the glycosyltransferase 1 family. Bacterial/plant glycogen synthase subfamily.

It catalyses the reaction [(1-&gt;4)-alpha-D-glucosyl](n) + ADP-alpha-D-glucose = [(1-&gt;4)-alpha-D-glucosyl](n+1) + ADP + H(+). It participates in glycan biosynthesis; glycogen biosynthesis. In terms of biological role, synthesizes alpha-1,4-glucan chains using ADP-glucose. This chain is Glycogen synthase, found in Fusobacterium nucleatum subsp. nucleatum (strain ATCC 25586 / DSM 15643 / BCRC 10681 / CIP 101130 / JCM 8532 / KCTC 2640 / LMG 13131 / VPI 4355).